The following is a 157-amino-acid chain: MKHILALVVFIISFFCFKDVNCIKDFQLSPIESPLTALNKYDKFFLRMYNKMPRLEQSSTDYINGINMKNTIFVLYFYAKWCHACKLQGPELDKLEKNFGKKVHIIRIDIDNNEEIAKKNFIKALPTTIIIKNKVILAKNEHFVTSNELTSTIRKHL.

Positions 1 to 22 (MKHILALVVFIISFFCFKDVNC) are cleaved as a signal peptide. The Thioredoxin domain maps to 46 to 157 (LRMYNKMPRL…ELTSTIRKHL (112 aa)). Catalysis depends on nucleophile residues C82 and C85. A disulfide bridge links C82 with C85.

It belongs to the thioredoxin family. Monomer. Component of the translocon PTEX complex composed of HSP101, EXP2, PTEX150, PTEX88 and TRX2. In terms of processing, the disulfide bond between Cys-82 and Cys-85 acts as a redox-active center and is reduced by thioredoxin reductase TRXR.

Functionally, participates in various redox reactions through the reversible oxidation of its active center dithiol to a disulfide and catalyzes dithiol-disulfide exchange reactions. As part of the translocon PTEX complex, plays a role in the export of parasite proteins into the host erythrocyte. The translocon PTEX complex is a multi-protein machinery resident in the parasite parasitophorous vacuolar membrane, responsible for protein secretion into host cells. May contribute to the unfolding of proteins containing the PEXEL localization motif before their passage through the translocon or regulate the PTEX complex function. This is Thioredoxin 2 from Plasmodium berghei (strain Anka).